We begin with the raw amino-acid sequence, 487 residues long: Serine/threonine-protein kinase BSK8 (487 aa).

The N-myristoyl glycine moiety is linked to residue Gly-2. At Ser-20 the chain carries Phosphoserine. One can recognise a Protein kinase domain in the interval 59–325 (ENIVSEHGER…DLEIASHQLL (267 aa)). Residues 65 to 73 (HGERAPNVV), Asn-71, Lys-87, and 133 to 135 (EFM) contribute to the ATP site. Asp-181 acts as the Proton acceptor in catalysis. Residues 185 to 186 (YR) and Asn-205 contribute to the ATP site. Phosphoserine is present on Ser-213.

It belongs to the protein kinase superfamily. Ser/Thr protein kinase family. As to quaternary structure, interacts with ASK7/BIN2, BSK1, BSK5, BSK6 and BSK11. Interacts with BSL2. In terms of processing, phosphorylated by BRI1, ASK7/BIN2 and ASK9/BIL2.

It is found in the cell membrane. The catalysed reaction is L-seryl-[protein] + ATP = O-phospho-L-seryl-[protein] + ADP + H(+). It carries out the reaction L-threonyl-[protein] + ATP = O-phospho-L-threonyl-[protein] + ADP + H(+). Functionally, probable serine/threonine kinase that acts as a positive regulator of brassinosteroid (BR) signaling downstream of the receptor kinase BRI1. Functions redundantly with BSK3, BSK4, BSK6 and BSK7. Involved in the regulation of sucrose-phosphate synthase 1 (SPS1) in the context of sucrose resuply after starvation. Activates BSL2, a phosphatase that may dephosphorylate SPS1, leading to the activation of SPS1. The protein is Serine/threonine-protein kinase BSK8 of Arabidopsis thaliana (Mouse-ear cress).